The primary structure comprises 220 residues: Deoxyribose-phosphate aldolase (220 aa).

The active-site Proton donor/acceptor is Asp92. Lys155 serves as the catalytic Schiff-base intermediate with acetaldehyde. Lys184 serves as the catalytic Proton donor/acceptor.

Belongs to the DeoC/FbaB aldolase family. DeoC type 1 subfamily.

Its subcellular location is the cytoplasm. It catalyses the reaction 2-deoxy-D-ribose 5-phosphate = D-glyceraldehyde 3-phosphate + acetaldehyde. It participates in carbohydrate degradation; 2-deoxy-D-ribose 1-phosphate degradation; D-glyceraldehyde 3-phosphate and acetaldehyde from 2-deoxy-alpha-D-ribose 1-phosphate: step 2/2. Its function is as follows. Catalyzes a reversible aldol reaction between acetaldehyde and D-glyceraldehyde 3-phosphate to generate 2-deoxy-D-ribose 5-phosphate. This is Deoxyribose-phosphate aldolase from Natranaerobius thermophilus (strain ATCC BAA-1301 / DSM 18059 / JW/NM-WN-LF).